A 345-amino-acid chain; its full sequence is Uroporphyrinogen decarboxylase (345 aa).

Substrate contacts are provided by residues 28–32 (RQAGR), D77, Y152, S207, and H321.

Belongs to the uroporphyrinogen decarboxylase family. Homodimer.

It localises to the cytoplasm. It carries out the reaction uroporphyrinogen III + 4 H(+) = coproporphyrinogen III + 4 CO2. It functions in the pathway porphyrin-containing compound metabolism; protoporphyrin-IX biosynthesis; coproporphyrinogen-III from 5-aminolevulinate: step 4/4. Functionally, catalyzes the decarboxylation of four acetate groups of uroporphyrinogen-III to yield coproporphyrinogen-III. The polypeptide is Uroporphyrinogen decarboxylase (Arthrobacter sp. (strain FB24)).